Consider the following 319-residue polypeptide: Acetyl esterase (319 aa).

The Involved in the stabilization of the negatively charged intermediate by the formation of the oxyanion hole motif lies at 91–93; the sequence is HGG. Catalysis depends on residues Ser-165, Asp-262, and His-292.

The protein belongs to the 'GDXG' lipolytic enzyme family. As to quaternary structure, homodimer. Interacts with MalT and MelA.

It is found in the cytoplasm. Functionally, displays esterase activity towards short chain fatty esters (acyl chain length of up to 8 carbons). Able to hydrolyze triacetylglycerol (triacetin) and tributyrylglycerol (tributyrin), but not trioleylglycerol (triolein) or cholesterol oleate. Negatively regulates MalT activity by antagonizing maltotriose binding. Inhibits MelA galactosidase activity. The polypeptide is Acetyl esterase (Escherichia coli O6:H1 (strain CFT073 / ATCC 700928 / UPEC)).